The following is a 505-amino-acid chain: MEEYQGYLELNKFRQNDFLYPLIFQEYIYALAHDQILKKCILSDNLSYDNKSSSLIVKRLITQMSQLNHLIISDNDSNQNTFLGHTKNLDYQNKMISEGFAVVVEIQFSLRLVFSLERREIVKSQNLRSIHSIFPFLEDNFLHLNYVSDILIPHPIHLEILVQTLRYWVKDASSLHLLRFFLYEYQNRTSLITSTPKKAISIVSKGNHRLFLILYNSYLCEYESIFIFICNQSSHLRSISSGTLFERIYFYGKIKNLVEVFYTDFPTVLWLFKAPFMYYVRYQGKSILASNGAPLLLNKWKYYLVNFWQCNFYLWSQPGRIHINQLSKNSLNFLGYLSSVRLNPSAVRSQMLENSFIMDNAIKKFDIIVPIIPLIRSLAKAKFCNLVGDPISKPAWADSSDSYIIDRFVRICRNIYHYHSGSSKKNCLYRVKYILRLSCARTLARKHKSTVRAFLKRLGSGLLEEFLTEDDSLIFPRTSSPLWRLYRGRVWYLDIICINDLVNHE.

Belongs to the intron maturase 2 family. MatK subfamily.

The protein resides in the plastid. It is found in the chloroplast. Usually encoded in the trnK tRNA gene intron. Probably assists in splicing its own and other chloroplast group II introns. This is Maturase K from Micranthes integrifolia (Wholeleaf saxifrage).